A 164-amino-acid chain; its full sequence is Cyclic pyranopterin monophosphate synthase (164 aa).

Substrate is bound by residues 75–77 and 116–117; these read MCH and ME. Asp131 is an active-site residue.

The protein belongs to the MoaC family. In terms of assembly, homohexamer; trimer of dimers.

The enzyme catalyses (8S)-3',8-cyclo-7,8-dihydroguanosine 5'-triphosphate = cyclic pyranopterin phosphate + diphosphate. Its pathway is cofactor biosynthesis; molybdopterin biosynthesis. Its function is as follows. Catalyzes the conversion of (8S)-3',8-cyclo-7,8-dihydroguanosine 5'-triphosphate to cyclic pyranopterin monophosphate (cPMP). The protein is Cyclic pyranopterin monophosphate synthase of Staphylococcus aureus (strain USA300).